A 273-amino-acid chain; its full sequence is NH(3)-dependent NAD(+) synthetase (273 aa).

46–53 (GISGGQDS) is an ATP binding site. Mg(2+) is bound at residue Asp52. Residue Arg139 participates in deamido-NAD(+) binding. Thr159 is an ATP binding site. Glu164 lines the Mg(2+) pocket. Residues Lys172 and Asp179 each coordinate deamido-NAD(+). Positions 188 and 210 each coordinate ATP. 259–260 (HK) serves as a coordination point for deamido-NAD(+).

It belongs to the NAD synthetase family. Homodimer.

It carries out the reaction deamido-NAD(+) + NH4(+) + ATP = AMP + diphosphate + NAD(+) + H(+). It functions in the pathway cofactor biosynthesis; NAD(+) biosynthesis; NAD(+) from deamido-NAD(+) (ammonia route): step 1/1. Catalyzes the ATP-dependent amidation of deamido-NAD to form NAD. Uses ammonia as a nitrogen source. The protein is NH(3)-dependent NAD(+) synthetase of Streptococcus thermophilus (strain ATCC BAA-250 / LMG 18311).